The sequence spans 453 residues: Carbamoyl phosphate synthase arginine-specific small chain (453 aa).

A mitochondrion-targeting transit peptide spans 1 to 28 (MFARVFKAMPARAPAFTSVNASIQSRFM). Residues 219–406 (HVAVIDCGVK…LDSVVKYKNH (188 aa)) form the Glutamine amidotransferase type-1 domain. The active-site Nucleophile is cysteine 295. Catalysis depends on residues histidine 379 and glutamate 381.

It belongs to the CarA family. As to quaternary structure, heterodimer composed of 2 chains; the small (or glutamine) chain promotes the hydrolysis of glutamine to ammonia, which is used by the large (or ammonia) chain to synthesize carbamoyl phosphate.

The protein resides in the mitochondrion matrix. It carries out the reaction hydrogencarbonate + L-glutamine + 2 ATP + H2O = carbamoyl phosphate + L-glutamate + 2 ADP + phosphate + 2 H(+). The catalysed reaction is L-glutamine + H2O = L-glutamate + NH4(+). The protein operates within amino-acid biosynthesis; L-arginine biosynthesis; carbamoyl phosphate from bicarbonate: step 1/1. Functionally, small subunit of the arginine-specific carbamoyl phosphate synthase (CPSase). CPSase catalyzes the formation of carbamoyl phosphate from the ammonia moiety of glutamine, carbonate, and phosphate donated by ATP, the first step of the arginine biosynthetic pathway. The small subunit (glutamine amidotransferase) binds and cleaves glutamine to supply the large subunit with the substrate ammonia. In Aspergillus niger (strain ATCC MYA-4892 / CBS 513.88 / FGSC A1513), this protein is Carbamoyl phosphate synthase arginine-specific small chain (cpa1).